The primary structure comprises 156 residues: Small ribosomal subunit protein uS7 (156 aa).

As to quaternary structure, part of the 30S ribosomal subunit. Contacts proteins S9 and S11. Binds to the C-terminus of IF3 and to the C-terminus of Era.

Its function is as follows. One of the primary rRNA binding proteins, it binds directly to 3'-end of the 16S rRNA where it nucleates assembly of the head domain of the 30S subunit. Is located at the subunit interface close to the decoding center. Binds mRNA and the E site tRNA blocking its exit path in the ribosome. This blockage implies that this section of the ribosome must be able to move to release the deacetylated tRNA. This is Small ribosomal subunit protein uS7 (rpsG) from Thermus thermophilus (strain ATCC 27634 / DSM 579 / HB8).